The primary structure comprises 257 residues: Small ribosomal subunit protein eS1 (257 aa).

Positions 237–257 (GADGEKVDRPDDYEPPVQQEV) are disordered. Residues 239 to 248 (DGEKVDRPDD) show a composition bias toward basic and acidic residues.

Belongs to the eukaryotic ribosomal protein eS1 family. In terms of assembly, component of the small ribosomal subunit. Mature ribosomes consist of a small (40S) and a large (60S) subunit. The 40S subunit contains about 33 different proteins and 1 molecule of RNA (18S). The 60S subunit contains about 49 different proteins and 3 molecules of RNA (28S, 5.8S and 5S).

It localises to the cytoplasm. The sequence is that of Small ribosomal subunit protein eS1 from Caenorhabditis elegans.